The following is a 395-amino-acid chain: MSNIHDMEFLQKKVQELKEQGLYKELVTLEGPSDAECVINGKKVINLSSNNYLGFANHPRLKKAAIEAIEKYGAGAGAVRPIIGNMKIHDDLEKLLAEFKREEAVLAFQSGFNCNAGVIQALTDKGDLIISDQLNHASIIDGTRLSKADKAVFQHSDMADLERVLKEKRNNYNNVLIITDGVFSMDGDIAKLPEIVALAEKYNCLTYVDDAHSSGVLGESGRGTVDHFKLHGRVDVAMGTLSKAIGVVGGYVAGKKVTIDWLKNRGRPFLFSTGLPPAAVGAAIEAVKMLMESTEYTDKLWANAKHFKEGLGKLGYNIGHSETPITPIIIGDEAKTLEFSKKLFENGLFSGPIVFPTVPKGTGRVRCMVTAGHTTEQLDRAVKICEKVGKEMGII.

Lys24 contacts substrate. Residue 111–112 (GF) participates in pyridoxal 5'-phosphate binding. A substrate-binding site is contributed by His136. Pyridoxal 5'-phosphate-binding positions include Ser184, 209–212 (DDAH), and 240–243 (TLSK). Lys243 is modified (N6-(pyridoxal phosphate)lysine). Residue Thr357 participates in substrate binding.

The protein belongs to the class-II pyridoxal-phosphate-dependent aminotransferase family. BioF subfamily. Homodimer. Pyridoxal 5'-phosphate serves as cofactor.

The enzyme catalyses 6-carboxyhexanoyl-[ACP] + L-alanine + H(+) = (8S)-8-amino-7-oxononanoate + holo-[ACP] + CO2. It participates in cofactor biosynthesis; biotin biosynthesis. In terms of biological role, catalyzes the decarboxylative condensation of pimeloyl-[acyl-carrier protein] and L-alanine to produce 8-amino-7-oxononanoate (AON), [acyl-carrier protein], and carbon dioxide. The sequence is that of 8-amino-7-oxononanoate synthase from Treponema denticola (strain ATCC 35405 / DSM 14222 / CIP 103919 / JCM 8153 / KCTC 15104).